The following is an 802-amino-acid chain: Copper-exporting P-type ATPase (802 aa).

2 consecutive HMA domains span residues 5 to 70 and 72 to 138; these read KKTT…YGVA and ETVE…YDAS. Residues cysteine 16, cysteine 19, cysteine 83, and cysteine 86 each coordinate Cu(+). 6 helical membrane-spanning segments follow: residues 161–181, 192–212, 224–244, 256–276, 411–431, and 438–458; these read LIIS…HLFN, WFQF…FYVG, MDVL…YEMV, LYFE…YLEA, YFVP…ITLV, and PALV…LGLA. The active-site 4-aspartylphosphate intermediate is aspartate 495. Mg(2+)-binding residues include aspartate 690 and aspartate 694. 2 helical membrane-spanning segments follow: residues 748 to 767 and 771 to 790; these read LFWA…LGLL and VAGA…ALRL.

It belongs to the cation transport ATPase (P-type) (TC 3.A.3) family. Type IB subfamily.

It localises to the cell membrane. It carries out the reaction Cu(+)(in) + ATP + H2O = Cu(+)(out) + ADP + phosphate + H(+). In terms of biological role, involved in copper export. The polypeptide is Copper-exporting P-type ATPase (copA) (Staphylococcus aureus (strain USA300 / TCH1516)).